Here is a 165-residue protein sequence, read N- to C-terminus: Adenine phosphoribosyltransferase (165 aa).

The protein belongs to the purine/pyrimidine phosphoribosyltransferase family. Homodimer.

It is found in the cytoplasm. It catalyses the reaction AMP + diphosphate = 5-phospho-alpha-D-ribose 1-diphosphate + adenine. The protein operates within purine metabolism; AMP biosynthesis via salvage pathway; AMP from adenine: step 1/1. Its function is as follows. Catalyzes a salvage reaction resulting in the formation of AMP, that is energically less costly than de novo synthesis. The polypeptide is Adenine phosphoribosyltransferase (Bdellovibrio bacteriovorus (strain ATCC 15356 / DSM 50701 / NCIMB 9529 / HD100)).